The primary structure comprises 180 residues: uncharacterized protein (180 aa).

An N-acetyltransferase domain is found at L31 to E180.

Belongs to the acetyltransferase family.

This is an uncharacterized protein from Bacillus subtilis (strain 168).